We begin with the raw amino-acid sequence, 156 residues long: Small ribosomal subunit protein uS7 (156 aa).

This sequence belongs to the universal ribosomal protein uS7 family. In terms of assembly, part of the 30S ribosomal subunit. Contacts proteins S9 and S11.

Functionally, one of the primary rRNA binding proteins, it binds directly to 16S rRNA where it nucleates assembly of the head domain of the 30S subunit. Is located at the subunit interface close to the decoding center, probably blocks exit of the E-site tRNA. This is Small ribosomal subunit protein uS7 from Azoarcus sp. (strain BH72).